The following is a 548-amino-acid chain: Probable malate:quinone oxidoreductase (548 aa).

The segment at 521-548 (DKPQAADSTPKPQLKPQPVQKEVADIAL) is disordered. The segment covering 530 to 541 (PKPQLKPQPVQK) has biased composition (low complexity).

This sequence belongs to the MQO family. It depends on FAD as a cofactor.

It catalyses the reaction (S)-malate + a quinone = a quinol + oxaloacetate. The protein operates within carbohydrate metabolism; tricarboxylic acid cycle; oxaloacetate from (S)-malate (quinone route): step 1/1. The chain is Probable malate:quinone oxidoreductase from Shigella boydii serotype 4 (strain Sb227).